We begin with the raw amino-acid sequence, 136 residues long: UPF0225 protein Pnap_0466 (136 aa).

This sequence belongs to the UPF0225 family.

This Polaromonas naphthalenivorans (strain CJ2) protein is UPF0225 protein Pnap_0466.